A 131-amino-acid polypeptide reads, in one-letter code: Large ribosomal subunit protein bL19 (131 aa).

This sequence belongs to the bacterial ribosomal protein bL19 family.

This protein is located at the 30S-50S ribosomal subunit interface and may play a role in the structure and function of the aminoacyl-tRNA binding site. This Afipia carboxidovorans (strain ATCC 49405 / DSM 1227 / KCTC 32145 / OM5) (Oligotropha carboxidovorans) protein is Large ribosomal subunit protein bL19.